The primary structure comprises 793 residues: MVRATGTRMGLLLPIILALAIGSSAAGISSNDPCYFEGKPRKCLPSFVNAAYGNPVQASSVCGAQQPERYCELLRDGNAGECRSCEQQRYGPAALTDLNNPSNVTCWRSGAVNVPHDPDSAPPDNVTLTLSLGKKYELTYISLSFCPRSPRPDSLAIFKSSDFGQTWQPFQFYSSQCQKFYGRPDRAKISKFNEQEARCINSQHDTGGAAQRFAFNTLEGRPSANDLDSSLVLQDWVTATDIRVVFHRLELPPQLLKVKNANAFSDEMGGSREEDEDDDADLELDGEQDEYDYNLQDNDSADAGYDEYEEPKKHLELDDDHLHLDYASDGESVVKRQGKHKGSAYEKHYQSKLAATTPPQQPPKVTPPGKVTPPSTAAPSAAASAVTLPISQHYAVSDFAVGGRCKCNGHASECVATVSSGSGTALSDQDDGQDEDTPSAPSLANHFGRSTQMSAKLTMTCACKHNTAGPECERCKPFYFDRPWGRATDNDANECKMCQCNGHARRCRFNLELYKLSGRVSGGVCYNCQHDTTGRYCHYCREGYYRDATKPPNHRKVCKRCDCHPVGSTGKTCNHLSGQCPCKEGVTGLTCNRCARGYQQTRSHVAPCIKVPTNANMIQAESAGGGGGGGTGDYKDGGGSQVEEMKKYCGKCKASPKKLNLNKFCMEDYAILAKVIGHDRASQDISTEKFSIERQNEIYKYEINIQTIFKRNPMSGTTSSLLGRGNMMLLVPRKSIECQCPKIKLNKSYLILGRDSEAAPGYLAIGPSSVVLEWKDEWSLRMKRFQRRARKCS.

Positions 1 to 22 are cleaved as a signal peptide; sequence MVRATGTRMGLLLPIILALAIG. A Laminin N-terminal domain is found at 39 to 303; the sequence is KPRKCLPSFV…NLQDNDSADA (265 aa). N-linked (GlcNAc...) asparagine glycosylation is found at N103, N125, and N298. Positions 332–378 are disordered; it reads SVVKRQGKHKGSAYEKHYQSKLAATTPPQQPPKVTPPGKVTPPSTAA. Residues 367-378 are compositionally biased toward low complexity; sequence PPGKVTPPSTAA. Disulfide bonds link C405/C414, C407/C461, C463/C472, C475/C495, C498/C507, C500/C525, C528/C537, C540/C558, C561/C573, C563/C580, C582/C591, C594/C608, C649/C738, C652/C740, and C665/C792. 3 consecutive Laminin EGF-like domains span residues 405-497, 498-560, and 561-610; these read CKCN…ECKM, CQCN…VCKR, and CDCH…PCIK. The disordered stretch occupies residues 420 to 446; sequence SGSGTALSDQDDGQDEDTPSAPSLANH. Positions 428 to 437 are enriched in acidic residues; that stretch reads DQDDGQDEDT. The NTR domain maps to 649 to 792; it reads CGKCKASPKK…KRFQRRARKC (144 aa). N746 carries N-linked (GlcNAc...) asparagine glycosylation.

Binds to unc-5 and fra receptors. At 24 hr after puparium formation (APF), detected in the most anterior (oldest) L3, L4 and L5 lamina neurons (at protein level). At 48 hr APF, expressed in all L3, L4 and L5 neurons with slightly higher expression in the L3 neurons (at protein level). At the midline of developing CNS and in different subsets of neurons, muscles, and epidermal patches.

It localises to the secreted. The protein localises to the extracellular space. Its subcellular location is the extracellular matrix. The protein resides in the cytoplasm. It is found in the perinuclear region. Netrins control guidance of CNS commissural axons and peripheral motor axons. Its association with either fra or unc-5 receptors will lead to axon attraction or repulsion, respectively. While short-range repulsion requires both fra and unc-5 receptors, long-range repulsion only requires unc-5. The protein is Netrin-B (NetB) of Drosophila melanogaster (Fruit fly).